Here is a 414-residue protein sequence, read N- to C-terminus: MSYIEKQEFLTELKTRNILKDISSPEKFFNLKPDQGIYIGFDPTATSLHLGNYISISLLKRLQKIGIKVLAVIGGATGMIGDPSFSSKERKLLDFKTLNANKEKIKKQLESFGLPVFDNFEIYKNMNILDFLRDVGKNINISYLLAKESVASRIEVGLSFTEFSYQLIQGWDFKFLAENYQIIGQAGGSDQWGNMVTGLDFIKKSNLVQKDEAFVFTTNLLTDENGQKFGKSLGKPIWLDPEMYSPFHLYQFLLNQNDEQAEKIMLWLSFLDLKVINELIFKHKNDKKQRILQYNLAQEVVFNIHGDKGLKIAKKITKILFEKLDYTEITFKDKLELKKIIPYFKVSFFNANQIIDLGIFKSKRELNEFISHKALEINGSKISNIGDITEELKDKSNLFLLRKGKKYFFIIELI.

Residue Tyr-38 participates in L-tyrosine binding. Residues 43–52 (PTATSLHLGN) carry the 'HIGH' region motif. L-tyrosine contacts are provided by Tyr-165 and Gln-169. The 'KMSKS' region motif lies at 228–232 (KFGKS). ATP is bound at residue Lys-231. The region spanning 349–414 (FNANQIIDLG…KKYFFIIELI (66 aa)) is the S4 RNA-binding domain.

The protein belongs to the class-I aminoacyl-tRNA synthetase family. TyrS type 1 subfamily. Homodimer.

The protein resides in the cytoplasm. The catalysed reaction is tRNA(Tyr) + L-tyrosine + ATP = L-tyrosyl-tRNA(Tyr) + AMP + diphosphate + H(+). Catalyzes the attachment of tyrosine to tRNA(Tyr) in a two-step reaction: tyrosine is first activated by ATP to form Tyr-AMP and then transferred to the acceptor end of tRNA(Tyr). The sequence is that of Tyrosine--tRNA ligase from Mesomycoplasma hyopneumoniae (strain 232) (Mycoplasma hyopneumoniae).